A 50-amino-acid polypeptide reads, in one-letter code: Kappa-actitoxin-Bcs4a (50 aa).

Belongs to the sea anemone type 5 potassium channel toxin family. Post-translationally, contains 4 disulfide bonds.

It localises to the secreted. The protein localises to the nematocyst. In terms of biological role, inhibits voltage-gated potassium channels (Kv1/KCNA). Is potent on Drosophila Shaker IR channels (IC(50)=94.25 nM), and rKv1.2/KCNA2 (IC(50)=172.59 nM), and moderately active on hKv1.3/KCNA3 (IC(50)=1006.48 nM), rKv1.6/KCNA6 (IC(50)=2245.93 nM), and Kv1.1/KCNA1 (IC(50) around 3 uM). In vivo, induces a rapid increase in swimming speed on zebrafish larvae, as well as death which occurs between 2 and 18 hours later. Also paralyzes swimming crabs (C.danae) when injected at the junction between the body and the walking leg. In Bunodosoma caissarum (Sea anemone), this protein is Kappa-actitoxin-Bcs4a.